Here is a 485-residue protein sequence, read N- to C-terminus: MDLFMPEIIILITALLVIITDLFLTKSKRHLAYLSLLGLGAAAVATVLNWDSPPELAFGGMWALDGYASFFRILFISLSGLVIMASVDYVNKFRRFQGEYYALVLLALLGMIMMASTTNLITMYLSLELAGLAFYVLVGFLKDQHSSESALKYLLLGGVASAMLVFGLVLIYGFSGETNLGSILNYIQTLPSGMDITAHTGFILGIILTITGLGFKVAAVPFQFWAPDVYQGSPTPITLYLSIASKAAGFALFLRLFYTVFTDPLALSQEWALIVAVLATAGMTLGNVLAIPQKNIKRMLGYSSIAHAGYILVALAAVGNSPELADGRISLLFYLVAFAVSDLVAFVSIIAISRSTGSDEIPSYEGLAKTNPVYASALTLALLSLTGFPPLAGFLAKYYIFSAAVQADLLWLMIVAAVNTVISAVFYFNVIRVMWLRQPREEVRVLASWPLKLALGISGLAVLIFGIIPETLLNLIEKATELIIH.

Helical transmembrane passes span 3–23, 30–50, 67–87, 96–116, 120–140, 154–174, 202–222, 247–267, 271–291, 299–319, 332–352, 375–395, 411–431, and 453–473; these read LFMPEIIILITALLVIITDLF, HLAYLSLLGLGAAAVATVLNW, YASFFRILFISLSGLVIMASV, FQGEYYALVLLALLGMIMMAS, LITMYLSLELAGLAFYVLVGF, LLLGGVASAMLVFGLVLIYGF, FILGIILTITGLGFKVAAVPF, AAGFALFLRLFYTVFTDPLAL, WALIVAVLATAGMTLGNVLAI, MLGYSSIAHAGYILVALAAVG, LFYLVAFAVSDLVAFVSIIAI, ASALTLALLSLTGFPPLAGFL, WLMIVAAVNTVISAVFYFNVI, and LALGISGLAVLIFGIIPETLL.

The protein belongs to the complex I subunit 2 family. NDH-1 is composed of 14 different subunits. Subunits NuoA, H, J, K, L, M, N constitute the membrane sector of the complex.

Its subcellular location is the cell membrane. It carries out the reaction a quinone + NADH + 5 H(+)(in) = a quinol + NAD(+) + 4 H(+)(out). In terms of biological role, NDH-1 shuttles electrons from NADH, via FMN and iron-sulfur (Fe-S) centers, to quinones in the respiratory chain. The immediate electron acceptor for the enzyme in this species is believed to be ubiquinone. Couples the redox reaction to proton translocation (for every two electrons transferred, four hydrogen ions are translocated across the cytoplasmic membrane), and thus conserves the redox energy in a proton gradient. This chain is NADH-quinone oxidoreductase subunit N, found in Dehalococcoides mccartyi (strain ATCC BAA-2100 / JCM 16839 / KCTC 5957 / BAV1).